Here is a 1220-residue protein sequence, read N- to C-terminus: MWLITILATISCVTAQLSQTNPDCPIPTCTILPPPKTTLDNTKFRVVYTKDQEALIYATNFTSPFNNAQYPLPTLGNHLNRSYTLNYDKVFLNIADSPDMLNLKTSWTVVNNSNLCPLSPSVYRSTSPLQTLTTAEQYCFMTTATLTSAFLYDYTAMKPVGYIRARAEETISFFSIMKTNMVNRPTSPSLSQAHTHTLAAMRTTATGIQAQTFKPQTGFFIVLDASRARAVTNPLDTAIQPKFSPSFIKEVTFDHIFQTTINETARSVTRETTTGYIMNAAKTGALYKASPAYYLFLISSDCRLQQALSVPYDFSLGRFCPASMSCCLNKGYEQYYVNTWLFHYYNLKRLNVLNLESSPVSDHFIQLHRTFNTEHSMHCDGSPYASDTTYNIALLRDTVQFLNGTKTTTPLANEIPQLTDSLGYLKYQPDMVDASDHQNYMAYVTYLMAIFYPTFTEAQKFEFHNLLQSVCYFDKGSISRNQAYHSICHIISFQTTASVPYPIELQIPFTTEPTSGYNAYLVKTPIGSVAIGNQNPFDGEGVCFLTTCIYHPTKKINQKLTIPPVRWQVVPEGIAVVTGIPPNCLGYETYTQGSSFFTIYNDSKPCQPQTMQIAQARSVITTVYSAAQKSDIFVQPYGKSSWVNGSYQFDQFVGGALNLRTLTFTMRKPTQLYVLDPIEGTYIIPDYQTKFPLLTSGTQTYYYDPDQTVTNTTEVSKVTIDFSIRTMITLDPLVFNCEEFICDKDPTCRTQFSSYCQTTQPILAALKDAFEKYNRSIADYTSTIRALTNTTQDLFASATPVRYRRGVEVPLGYGHDLEQPSWVYDLGGTAIVPWIGTAVAVGKLANRVASIEATLYQITQGVKQSIQSTNDKFDKITNILHTHLRPVTEGLVRTNEQLNAFSKQVRDQFTMINTVTTELSAYVDQLQQVFTVGAFYQNQILQVISQLNSLQVYVDTLTSSFTDCISDLNQKILSPACITTHQLLQINKPSDNLGLKNVLTHYINGSAATFYHLTSTKGVYKPLPKLFNNTHFLAPTTAYNPVTGTCFFCGSNACDKSVTVDCDYQPQPLQSTILAVYPTPTGLDLLTITSNKTFEIKHGSTVVTSVAIPPPPILSSTININVTFQQQLLQLQEQVDQLNLQTNYTTTEIQSIIDKYNVEIQNALNQIVDFGPGTPSLALWKVILILIAVVVVIVIIATTIFCSVRKNQSELPLQVLSRLR.

The first 15 residues, 1–15 (MWLITILATISCVTA), serve as a signal peptide directing secretion. The Virion surface portion of the chain corresponds to 16-1181 (QLSQTNPDCP…PGTPSLALWK (1166 aa)). Residues Asn-60, Asn-80, Asn-111, Asn-262, Asn-403, Asn-601, Asn-644, Asn-711, Asn-774, Asn-789, Asn-1004, Asn-1028, Asn-1091, Asn-1121, and Asn-1143 are each glycosylated (N-linked (GlcNAc...) asparagine; by host). Residues 1118 to 1169 (ININVTFQQQLLQLQEQVDQLNLQTNYTTTEIQSIIDKYNVEIQNALNQIVD) are a coiled coil. Residues 1182 to 1202 (VILILIAVVVVIVIIATTIFC) traverse the membrane as a helical segment. Over 1203 to 1220 (SVRKNQSELPLQVLSRLR) the chain is Intravirion.

The protein belongs to the torovirinae spike protein family. As to quaternary structure, homotrimer.

The protein localises to the virion membrane. Mediates the binding of virions to the host cell receptor and is involved in membrane fusion. This chain is Spike glycoprotein (S), found in Blicca bjoerkna (white bream).